We begin with the raw amino-acid sequence, 157 residues long: MIIEKILGNLHQQPDAYASHHKEKVVLPSTLLVKRIQRVTTDHGKELGIRLPAGTGDLRDGDILAIDQHNIIVVSVLPTDVLVIKARTIHEMGVVAHSLGNRHLQAQFFDGSSEYGAEVMVCQYDHTVEDYLKSVGVPYDRQERVMPVPFRHAEHSH.

Belongs to the UreE family.

The protein resides in the cytoplasm. Functionally, involved in urease metallocenter assembly. Binds nickel. Probably functions as a nickel donor during metallocenter assembly. The sequence is that of Urease accessory protein UreE from Paenarthrobacter aurescens (strain TC1).